We begin with the raw amino-acid sequence, 475 residues long: Ribulose bisphosphate carboxylase large chain (475 aa).

Residues 1-2 (MS) constitute a propeptide that is removed on maturation. P3 is subject to N-acetylproline. K14 is modified (N6,N6,N6-trimethyllysine). The substrate site is built by N123 and T173. K175 acts as the Proton acceptor in catalysis. K177 provides a ligand contact to substrate. Residues K201, D203, and E204 each coordinate Mg(2+). K201 bears the N6-carboxylysine mark. H294 serves as the catalytic Proton acceptor. Substrate contacts are provided by R295, H327, and S379.

The protein belongs to the RuBisCO large chain family. Type I subfamily. In terms of assembly, heterohexadecamer of 8 large chains and 8 small chains; disulfide-linked. The disulfide link is formed within the large subunit homodimers. It depends on Mg(2+) as a cofactor. In terms of processing, the disulfide bond which can form in the large chain dimeric partners within the hexadecamer appears to be associated with oxidative stress and protein turnover.

The protein localises to the plastid. The protein resides in the chloroplast. The enzyme catalyses 2 (2R)-3-phosphoglycerate + 2 H(+) = D-ribulose 1,5-bisphosphate + CO2 + H2O. The catalysed reaction is D-ribulose 1,5-bisphosphate + O2 = 2-phosphoglycolate + (2R)-3-phosphoglycerate + 2 H(+). Its function is as follows. RuBisCO catalyzes two reactions: the carboxylation of D-ribulose 1,5-bisphosphate, the primary event in carbon dioxide fixation, as well as the oxidative fragmentation of the pentose substrate in the photorespiration process. Both reactions occur simultaneously and in competition at the same active site. The protein is Ribulose bisphosphate carboxylase large chain of Carpinus caroliniana (American hornbeam).